Reading from the N-terminus, the 860-residue chain is MEARGLACESSNSAVKAPSIEDFVLVKPISRGAFGKVYLARKKCNSKLYAIKVVKKAEMVDKNMTEQMRAERDALALSKSPFIVHLFYSLQTATKVYLVMEYLIGGDVKSLLHIYGYFDEDMSLKYISEVALALDYLHRHSIIHRDLKPDNMLISNEGHIKLTDFGLSKVKLDRELNLMDILTTPSLVKPTKDYFRTPGQVLSLISSLGLNTPVIEGKRHSSTVLGSPMSCGKVKQRNRSLGSPLMKRRAEYMNSPVCTSRALASNSVFSPVLLARSLTPRLLKSGKRLDTMSVGSTHSCMLPSTTDSENCVSPMWEDEQNLHDVENIPQLNGREVDNRKSRNVPLTPVEKRKTLPARAQDHRPVFTPLNNQVTNSRNIKPDLSAKRLQFGATDNSATPLEKTVPHQSVGNGLIKPEPLKELKSSVKRAFEEVEKSPEQAEILFKKNDAAYERSFQIPEKTSRAHTGLTGIFSIVGLDDVKSAPKCQQFNERTGPKQSSPIAVAKNLFCELEDQGEEGGKAEPNSSSSTSPGDERNIRRSLSLESDVSAHEMSLVANTPQKLSDAKQEVLSSSFEELDENEISAVTPMARPTVATPKHSSAKQRRGECERSLLDHPHGLSDSMIKSPGFLKPKNVVAFRSYCSSINRSCTSHLSLASFDAMEMSASASFHNAVTPVQKKRPSLSNSLYQTPQQMVVSHTPYRTPKSVRRGPERVEGAPILGTPDYLAPELLLGKPHDFMVDWWALGVCLFEFLTGVPPFNDETPQLVFQNILNRDIPWPDGEEELTLNSRNAIEILLTMDTLKRAGLKELKDHPFFDGVDWENLHHQTMPFIPQPDNETDTSYFEARNTAQHLTVSGFSL.

One can recognise a Protein kinase domain in the interval 23–816 (FVLVKPISRG…LKELKDHPFF (794 aa)). Residues 29-37 (ISRGAFGKV) and K52 contribute to the ATP site. D146 acts as the Proton acceptor in catalysis. A disordered region spans residues 514-537 (QGEEGGKAEPNSSSSTSPGDERNI). A Phosphothreonine; by CDK1 modification is found at T722. The region spanning 817-860 (DGVDWENLHHQTMPFIPQPDNETDTSYFEARNTAQHLTVSGFSL) is the AGC-kinase C-terminal domain.

It belongs to the protein kinase superfamily. AGC Ser/Thr protein kinase family. In terms of processing, phosphorylation at Thr-722 by CDK1 during M phase activates its kinase activity. Maximum phosphorylation occurs in prometaphase.

The protein localises to the cytoplasm. The protein resides in the cytoskeleton. Its subcellular location is the microtubule organizing center. It localises to the centrosome. It is found in the nucleus. The protein localises to the cleavage furrow. It carries out the reaction L-seryl-[protein] + ATP = O-phospho-L-seryl-[protein] + ADP + H(+). It catalyses the reaction L-threonyl-[protein] + ATP = O-phospho-L-threonyl-[protein] + ADP + H(+). Serine/threonine kinase that plays a key role in M phase by acting as a regulator of mitosis entry and maintenance. Acts by promoting the inactivation of protein phosphatase 2A (PP2A) during M phase: does not directly inhibit PP2A but acts by mediating phosphorylation and subsequent activation of arpp19 and ensa at 'Ser-62' and 'Ser-74', respectively. ARPP19 and ENSA are phosphatase inhibitors that specifically inhibit the ppp2r2d (PR55-delta) subunit of PP2A. Inactivation of PP2A during M phase is essential to keep cyclin-B1-CDK1 activity high. Following DNA damage, it is also involved in checkpoint recovery by being inhibited. May be involved in megakaryocyte differentiation. The polypeptide is Serine/threonine-protein kinase greatwall (mastl) (Danio rerio (Zebrafish)).